Consider the following 92-residue polypeptide: Large ribosomal subunit protein eL43 (92 aa).

The C4-type zinc-finger motif lies at 39-60 (CDFCGKYGMKRQAVGIWCCKGC).

This sequence belongs to the eukaryotic ribosomal protein eL43 family.

The chain is Large ribosomal subunit protein eL43 (RPL37a) from Ostreococcus tauri.